The primary structure comprises 118 residues: Cycloviolacin-O11 (118 aa).

Positions 1–22 (MEMKNMVVGLFLIAAFALPALA) are cleaved as a signal peptide. Residues 23–84 (TSFEKDFITH…THSNSINALG (62 aa)) constitute a propeptide that is removed on maturation. The segment at residues 85-115 (GTLPCGESCVWIPCISAVVGCSCKSKVCYKN) is a cross-link (cyclopeptide (Gly-Asn)). 3 disulfide bridges follow: C89/C105, C93/C107, and C98/C112. Positions 116–118 (SLA) are excised as a propeptide.

Post-translationally, cycloviolacin-O11 is a cyclic peptide. In terms of tissue distribution, expressed in leaves, petals and petioles but not in roots and runners (at protein level).

Its function is as follows. Probably participates in a plant defense mechanism. The sequence is that of Cycloviolacin-O11 (Voc2) from Viola odorata (Sweet violet).